The sequence spans 332 residues: Hygromycin-B 7''-O-kinase (332 aa).

The active-site Proton acceptor is Asp223.

Belongs to the aminoglycoside phosphotransferase family.

It carries out the reaction hygromycin B + ATP = 7''-O-phosphohygromycin B + ADP + H(+). The aminoglycoside phosphotransferases achieve inactivation of their antibiotic substrates by phosphorylation. The polypeptide is Hygromycin-B 7''-O-kinase (hyg) (Streptomyces hygroscopicus).